A 467-amino-acid polypeptide reads, in one-letter code: Hydroxyacid-oxoacid transhydrogenase, mitochondrial (467 aa).

N6-acetyllysine is present on Lys445. Residue Ser452 is modified to Phosphoserine.

The protein belongs to the iron-containing alcohol dehydrogenase family. Hydroxyacid-oxoacid transhydrogenase subfamily. Only expressed in adult liver.

It localises to the mitochondrion. It carries out the reaction (S)-3-hydroxybutanoate + 2-oxoglutarate = (R)-2-hydroxyglutarate + acetoacetate. The catalysed reaction is 4-hydroxybutanoate + 2-oxoglutarate = (R)-2-hydroxyglutarate + succinate semialdehyde. Its function is as follows. Catalyzes the cofactor-independent reversible oxidation of gamma-hydroxybutyrate (GHB) to succinic semialdehyde (SSA) coupled to reduction of 2-ketoglutarate (2-KG) to D-2-hydroxyglutarate (D-2-HG). D,L-3-hydroxyisobutyrate and L-3-hydroxybutyrate (L-3-OHB) are also substrates for HOT with 10-fold lower activities. The sequence is that of Hydroxyacid-oxoacid transhydrogenase, mitochondrial (ADHFE1) from Homo sapiens (Human).